Reading from the N-terminus, the 630-residue chain is 1-deoxy-D-xylulose-5-phosphate synthase (630 aa).

Residues His74 and 115–117 (GHA) contribute to the thiamine diphosphate site. Asp146 lines the Mg(2+) pocket. Thiamine diphosphate is bound by residues 147–148 (AA), Asn175, Phe284, and Glu364. Asn175 serves as a coordination point for Mg(2+).

Belongs to the transketolase family. DXPS subfamily. Homodimer. It depends on Mg(2+) as a cofactor. The cofactor is thiamine diphosphate.

The enzyme catalyses D-glyceraldehyde 3-phosphate + pyruvate + H(+) = 1-deoxy-D-xylulose 5-phosphate + CO2. It participates in metabolic intermediate biosynthesis; 1-deoxy-D-xylulose 5-phosphate biosynthesis; 1-deoxy-D-xylulose 5-phosphate from D-glyceraldehyde 3-phosphate and pyruvate: step 1/1. Catalyzes the acyloin condensation reaction between C atoms 2 and 3 of pyruvate and glyceraldehyde 3-phosphate to yield 1-deoxy-D-xylulose-5-phosphate (DXP). The protein is 1-deoxy-D-xylulose-5-phosphate synthase of Methylacidiphilum infernorum (isolate V4) (Methylokorus infernorum (strain V4)).